A 576-amino-acid polypeptide reads, in one-letter code: Putative diflavin flavoprotein A 1 (576 aa).

Residues 48–240 (RNGTTYNSFL…LAIKTVATGH (193 aa)) form a zinc metallo-hydrolase region. Fe cation contacts are provided by His97, Glu99, Asp101, His164, Asp183, and His240. The Flavodoxin-like domain occupies 269–431 (VALFYAEDYG…DLEKALGRIS (163 aa)). A flavodoxin-reductase-like region spans residues 432–576 (TGLYIITTKK…VHHRKVGNHY (145 aa)).

The protein in the N-terminal section; belongs to the zinc metallo-hydrolase group 3 family. It in the C-terminal section; belongs to the flavodoxin reductase family. Fe cation serves as cofactor.

Mediates electron transfer from NADH to oxygen, reducing it to water. This modular protein has 3 redox cofactors, in other organisms the same activity requires 2 or 3 proteins. The sequence is that of Putative diflavin flavoprotein A 1 (dfa1) from Nostoc sp. (strain PCC 7120 / SAG 25.82 / UTEX 2576).